The sequence spans 317 residues: Probable transcription factor At5g61620 (317 aa).

The CCHC-type zinc finger occupies 12–25 (CSHCGHNGHNARTC). Residues 77–111 (DPIAAVDDTGYHSDGQIHSKKGKTAHEKKKGKPWT) are disordered. Over residues 94–108 (HSKKGKTAHEKKKGK) the composition is skewed to basic residues. The 57-residue stretch at 102–158 (HEKKKGKPWTEEEHRNFLIGLNKLGKGDWRGIAKSFVSTRTPTQVASHAQKYFIRLN) folds into the HTH myb-type domain. A DNA-binding region (H-T-H motif) is located at residues 130-154 (WRGIAKSFVSTRTPTQVASHAQKYF). The tract at residues 173 to 206 (SLEDQKEKERNSQDASTKTPPKQPITGIQQPVVQ) is disordered. A compositionally biased stretch (basic and acidic residues) spans 175-184 (EDQKEKERNS). Residues 185–206 (QDASTKTPPKQPITGIQQPVVQ) show a composition bias toward polar residues.

The protein resides in the nucleus. Its function is as follows. Probable transcription factor involved in somatic embryogenesis. Acts as a positive regulator of BHLH109. The polypeptide is Probable transcription factor At5g61620 (Arabidopsis thaliana (Mouse-ear cress)).